A 225-amino-acid chain; its full sequence is Membrane protein LapB (225 aa).

To H.influenzae HI_1119.

It localises to the cell membrane. This is Membrane protein LapB (lapB) from Mannheimia haemolytica (Pasteurella haemolytica).